The sequence spans 333 residues: Alpha-N-acetylgalactosaminide alpha-2,6-sialyltransferase 6 (333 aa).

The span at 1 to 12 shows a compositional bias: polar residues; sequence MACSRPPSQCEP. The interval 1–26 is disordered; it reads MACSRPPSQCEPTSLPPGPPAGRRHL. Topologically, residues 1–43 are cytoplasmic; that stretch reads MACSRPPSQCEPTSLPPGPPAGRRHLPLSRRRREMSSNKEQRS. Residues 44–64 traverse the membrane as a helical; Signal-anchor for type II membrane protein segment; sequence AVFVILFALITILILYSSNSA. Residues 65 to 333 lie on the Lumenal side of the membrane; sequence NEVFHYGSLR…GITFSHPSWT (269 aa). Asn-98 carries an N-linked (GlcNAc...) asparagine glycan. Cysteines 108 and 256 form a disulfide.

It belongs to the glycosyltransferase 29 family. As to expression, expressed in kidney, in proximal tubule epithelial cells. Expressed in colon cell lines.

The protein resides in the golgi apparatus membrane. The catalysed reaction is a ganglioside GM1b (d18:1(4E)) + CMP-N-acetyl-beta-neuraminate = a ganglioside GD1alpha (d18:1(4E)) + CMP + H(+). The enzyme catalyses N-acetyl-alpha-neuraminosyl-(2-&gt;3)-beta-D-galactosyl-(1-&gt;3)-N-acetyl-beta-D-glucosaminyl-(1-&gt;3)-beta-D-galactosyl-(1-&gt;4)-beta-D-glucosyl-(1&lt;-&gt;1')-N-acyl-sphing-4-enine + CMP-N-acetyl-beta-neuraminate = N-acetyl-alpha-neuraminosyl-(2-&gt;3)-beta-D-galactosyl-(1-&gt;3)-[N-acetyl-alpha-neuraminosyl-(2-&gt;6)]-N-acetyl-beta-D-glucosaminyl-(1-&gt;3)-beta-D-galactosyl-(1-&gt;4)-beta-D-glucosyl-(1&lt;-&gt;1')-N-acyl-sphing-4-enine + CMP + H(+). It carries out the reaction a globoside MSGG + CMP-N-acetyl-beta-neuraminate = a globoside DSGG + CMP + H(+). It catalyses the reaction a ganglioside GD1a (d18:1(4E)) + CMP-N-acetyl-beta-neuraminate = a ganglioside GT1aalpha (d18:1(4E)) + CMP + H(+). The catalysed reaction is a ganglioside GT1b (d18:1(4E)) + CMP-N-acetyl-beta-neuraminate = a ganglioside GQ1balpha (d18:1(4E)) + CMP + H(+). The enzyme catalyses 3-O-[alpha-Neu5Ac-(2-&gt;3)-beta-D-Gal-(1-&gt;3)-alpha-D-GalNAc]-L-Ser-[protein] + CMP-N-acetyl-beta-neuraminate = a 3-O-{alpha-Neu5Ac-(2-&gt;3)-beta-D-Gal-(1-&gt;3)-[alpha-Neu5Ac-(2-&gt;6)]-alpha-D-GalNAc}-L-seryl-[protein] + CMP + H(+). It carries out the reaction 3-O-[alpha-Neu5Ac-(2-&gt;3)-beta-D-Gal-(1-&gt;3)-alpha-D-GalNAc]-L-Thr-[protein] + CMP-N-acetyl-beta-neuraminate = a 3-O-{alpha-Neu5Ac-(2-&gt;3)-beta-D-Gal-(1-&gt;3)-[alpha-Neu5Ac-(2-&gt;6)]-alpha-D-GalNAc}-L-threonyl-[protein] + CMP + H(+). Transfers the sialyl group (N-acetyl-alpha-neuraminyl or NeuAc) from CMP-NeuAc onto glycoproteins and glycolipids, forming an alpha-2,6-linkage. Produces branched type disialyl structures by transfer of a sialyl group onto the GalNAc or GlcNAc residue inside backbone core chains having a terminal sialic acid with an alpha-2,3-linkage on Gal. ST6GalNAcVI prefers glycolipids to glycoproteins, predominantly catalyzing the biosynthesis of ganglioside GD1alpha from GM1b. Besides GMb1, MSGG and other glycolipids, it shows activity towards sialyl Lc4Cer generating disialyl Lc4Cer, which can lead to the synthesis of disialyl Lewis a (Le(a)), suggested to be a cancer-associated antigen. Also has activity toward GD1a and GT1b, and can generate DSGG (disialylgalactosylgloboside) from MSGG (monosialylgalactosylgloboside). This chain is Alpha-N-acetylgalactosaminide alpha-2,6-sialyltransferase 6 (ST6GALNAC6), found in Homo sapiens (Human).